We begin with the raw amino-acid sequence, 370 residues long: Putative agmatine deiminase (370 aa).

The active-site Amidino-cysteine intermediate is the C361.

Belongs to the agmatine deiminase family.

The catalysed reaction is agmatine + H2O = N-carbamoylputrescine + NH4(+). This is Putative agmatine deiminase from Shewanella baltica (strain OS155 / ATCC BAA-1091).